The sequence spans 157 residues: Peptide methionine sulfoxide reductase MsrA (157 aa).

Residue cysteine 13 is part of the active site.

The protein belongs to the MsrA Met sulfoxide reductase family.

It catalyses the reaction L-methionyl-[protein] + [thioredoxin]-disulfide + H2O = L-methionyl-(S)-S-oxide-[protein] + [thioredoxin]-dithiol. The enzyme catalyses [thioredoxin]-disulfide + L-methionine + H2O = L-methionine (S)-S-oxide + [thioredoxin]-dithiol. Its function is as follows. Has an important function as a repair enzyme for proteins that have been inactivated by oxidation. Catalyzes the reversible oxidation-reduction of methionine sulfoxide in proteins to methionine. The chain is Peptide methionine sulfoxide reductase MsrA from Methanococcus maripaludis (strain C6 / ATCC BAA-1332).